Reading from the N-terminus, the 318-residue chain is Pantothenate kinase (318 aa).

Residue 96-103 participates in ATP binding; the sequence is GSVAVGKS.

The protein belongs to the prokaryotic pantothenate kinase family.

It localises to the cytoplasm. The enzyme catalyses (R)-pantothenate + ATP = (R)-4'-phosphopantothenate + ADP + H(+). It participates in cofactor biosynthesis; coenzyme A biosynthesis; CoA from (R)-pantothenate: step 1/5. In Rhodopseudomonas palustris (strain HaA2), this protein is Pantothenate kinase.